The following is a 90-amino-acid chain: Cell division topological specificity factor (90 aa).

It belongs to the MinE family.

Functionally, prevents the cell division inhibition by proteins MinC and MinD at internal division sites while permitting inhibition at polar sites. This ensures cell division at the proper site by restricting the formation of a division septum at the midpoint of the long axis of the cell. The polypeptide is Cell division topological specificity factor (Clostridium perfringens (strain ATCC 13124 / DSM 756 / JCM 1290 / NCIMB 6125 / NCTC 8237 / Type A)).